Reading from the N-terminus, the 355-residue chain is 3-dehydroquinate synthase (355 aa).

NAD(+) contacts are provided by residues 105 to 109 (GVVGD), 129 to 130 (TS), K142, K151, and 169 to 172 (TLKT). Positions 184, 246, and 263 each coordinate Zn(2+).

This sequence belongs to the sugar phosphate cyclases superfamily. Dehydroquinate synthase family. The cofactor is NAD(+). Co(2+) is required as a cofactor. It depends on Zn(2+) as a cofactor.

The protein localises to the cytoplasm. It carries out the reaction 7-phospho-2-dehydro-3-deoxy-D-arabino-heptonate = 3-dehydroquinate + phosphate. It functions in the pathway metabolic intermediate biosynthesis; chorismate biosynthesis; chorismate from D-erythrose 4-phosphate and phosphoenolpyruvate: step 2/7. In terms of biological role, catalyzes the conversion of 3-deoxy-D-arabino-heptulosonate 7-phosphate (DAHP) to dehydroquinate (DHQ). The chain is 3-dehydroquinate synthase from Streptococcus agalactiae serotype V (strain ATCC BAA-611 / 2603 V/R).